The following is a 549-amino-acid chain: uncharacterized protein (549 aa).

The next 12 helical transmembrane spans lie at 27-47, 108-128, 146-166, 197-217, 233-253, 265-285, 308-328, 352-372, 399-419, 434-454, 472-492, and 501-521; these read ILRF…YVFV, PIVV…GVIF, TGLV…LAIA, AVAI…IPML, FIAI…FLLV, VAAI…LISL, FLVI…LSIL, LVLL…IFGV, TLLV…VGLG, LMLA…VAIG, IVSL…FQAI, and IFIW…VLIG.

It localises to the cell membrane. This is an uncharacterized protein from Mycoplasma pneumoniae (strain ATCC 29342 / M129 / Subtype 1) (Mycoplasmoides pneumoniae).